Reading from the N-terminus, the 149-residue chain is Calmodulin (149 aa).

Alanine 2 carries the post-translational modification N-acetylalanine. EF-hand domains follow at residues 8–43 (DQISEFKEAFSLFDKDGDGCITTKELGTVMRSLGQN), 44–79 (PTEAELQDMINEVDADGNGTIDFPEPLNLMARKMKD), 81–116 (DSEEELKEAFRVFDKDQNGFISAAELRHVMTNLGEK), and 117–149 (LTDEEVDEMIREADVDGDGQINYEEFVKVMMAK). Residues aspartate 21, aspartate 23, aspartate 25, cysteine 27, glutamate 32, aspartate 57, aspartate 59, asparagine 61, threonine 63, glutamate 68, aspartate 94, aspartate 96, asparagine 98, and glutamate 105 each contribute to the Ca(2+) site. Residue lysine 116 is modified to N6,N6,N6-trimethyllysine. Aspartate 130, aspartate 132, aspartate 134, glutamine 136, and glutamate 141 together coordinate Ca(2+).

It belongs to the calmodulin family.

Functionally, calmodulin mediates the control of a large number of enzymes, ion channels and other proteins by Ca(2+). Among the enzymes to be stimulated by the calmodulin-Ca(2+) complex are a number of protein kinases and phosphatases. In Malus domestica (Apple), this protein is Calmodulin (CAM).